The following is a 485-amino-acid chain: Glutamyl-tRNA(Gln) amidotransferase subunit A (485 aa).

Active-site charge relay system residues include Lys-78 and Ser-153. The active-site Acyl-ester intermediate is Ser-177.

It belongs to the amidase family. GatA subfamily. In terms of assembly, heterotrimer of A, B and C subunits.

The enzyme catalyses L-glutamyl-tRNA(Gln) + L-glutamine + ATP + H2O = L-glutaminyl-tRNA(Gln) + L-glutamate + ADP + phosphate + H(+). In terms of biological role, allows the formation of correctly charged Gln-tRNA(Gln) through the transamidation of misacylated Glu-tRNA(Gln) in organisms which lack glutaminyl-tRNA synthetase. The reaction takes place in the presence of glutamine and ATP through an activated gamma-phospho-Glu-tRNA(Gln). This is Glutamyl-tRNA(Gln) amidotransferase subunit A from Syntrophus aciditrophicus (strain SB).